Here is a 318-residue protein sequence, read N- to C-terminus: Isoflavone reductase (318 aa).

Residues 11 to 17 (GPTGAIG), R36, and K44 each bind NADP(+). K144 serves as the catalytic Proton acceptor. R148 contacts NADP(+).

Belongs to the NmrA-type oxidoreductase family. Isoflavone reductase subfamily.

The enzyme catalyses (3R)-vestitone + NADP(+) = 2'-hydroxyformononetin + NADPH + 2 H(+). It functions in the pathway phytoalexin biosynthesis; pterocarpan phytoalexin biosynthesis. Its function is as follows. Reduces achiral isoflavones to chiral isoflavanones during the biosynthesis of chiral pterocarpan phytoalexins. The reduction product is a third isomer, which represents the penultimate intermediate in the synthesis of the phytoalexin (-)-medicarpin, the major phytoalexin in Alfalfa. The protein is Isoflavone reductase of Medicago sativa (Alfalfa).